The primary structure comprises 100 residues: Replication restart protein PriB (100 aa).

The SSB domain maps to 1-99 (MGFNNLVSLA…LRIQNIQEYK (99 aa)).

Belongs to the PriB family. In terms of assembly, homodimer. Interacts with PriA and DnaT. Component of the replication restart primosome. Primosome assembly occurs via a 'hand-off' mechanism. PriA binds to replication forks, subsequently PriB then DnaT bind; DnaT then displaces ssDNA to generate the helicase loading substrate.

In terms of biological role, involved in the restart of stalled replication forks, which reloads the replicative helicase on sites other than the origin of replication; the PriA-PriB pathway is the major replication restart pathway. During primosome assembly it facilitates complex formation between PriA and DnaT on DNA; stabilizes PriA on DNA. Stimulates the DNA unwinding activity of PriA helicase. The polypeptide is Replication restart protein PriB (Neisseria meningitidis serogroup B (strain ATCC BAA-335 / MC58)).